The following is a 136-amino-acid chain: ATP synthase epsilon chain (136 aa).

The protein belongs to the ATPase epsilon chain family. In terms of assembly, F-type ATPases have 2 components, CF(1) - the catalytic core - and CF(0) - the membrane proton channel. CF(1) has five subunits: alpha(3), beta(3), gamma(1), delta(1), epsilon(1). CF(0) has three main subunits: a, b and c.

It is found in the cell membrane. Its function is as follows. Produces ATP from ADP in the presence of a proton gradient across the membrane. The sequence is that of ATP synthase epsilon chain from Herpetosiphon aurantiacus (strain ATCC 23779 / DSM 785 / 114-95).